The chain runs to 321 residues: Sideroflexin-1-3 (321 aa).

The next 5 helical transmembrane spans lie at 101-121 (IITGGMMAFYKSTPAVVFWQW), 146-168 (LVTSYCLATSGALVTALSLNHAV), 174-194 (LLGRLVPLVAVGAANCINIPC), 220-240 (AAVVGISTVILSRIAMAIPGM), and 266-286 (IQTLFCGFVLIFATPLGCAFF).

This sequence belongs to the sideroflexin family.

The protein resides in the mitochondrion membrane. Mitochondrial amino-acid transporter that mediates transport of serine into mitochondria. In Drosophila melanogaster (Fruit fly), this protein is Sideroflexin-1-3.